Consider the following 599-residue polypeptide: Pentatricopeptide repeat-containing protein At3g62540, mitochondrial (599 aa).

A mitochondrion-targeting transit peptide spans 1-99 (MAAAPWLYLS…RGFSSGSSNV (99 aa)). PPR repeat units follow at residues 194 to 228 (ASRT…GLLT), 230 to 262 (ETFT…KFKI), 263 to 293 (GVET…LKER), 297 to 331 (NMMT…GLKP), 332 to 366 (DIVA…GPCP), 367 to 401 (NVRS…GLQP), 402 to 436 (DAAV…GHPP), 437 to 471 (DGKT…EIEP), 472 to 506 (SIHT…GICP), and 507 to 541 (DDNS…GMKT).

Belongs to the PPR family. P subfamily.

The protein resides in the mitochondrion. This is Pentatricopeptide repeat-containing protein At3g62540, mitochondrial from Arabidopsis thaliana (Mouse-ear cress).